A 505-amino-acid polypeptide reads, in one-letter code: Lysine--tRNA ligase (505 aa).

The Mg(2+) site is built by glutamate 415 and glutamate 422.

This sequence belongs to the class-II aminoacyl-tRNA synthetase family. Homodimer. Mg(2+) is required as a cofactor.

The protein localises to the cytoplasm. It catalyses the reaction tRNA(Lys) + L-lysine + ATP = L-lysyl-tRNA(Lys) + AMP + diphosphate. This Salmonella paratyphi C (strain RKS4594) protein is Lysine--tRNA ligase.